We begin with the raw amino-acid sequence, 596 residues long: Fc receptor-like protein 5 (596 aa).

Residues 1–26 (MSGSFSPCVVFTQMWLTLLVVTPVNG) form the signal peptide. Residues 27–496 (QHEAAQQSVV…MTKNRSVPMA (470 aa)) are Extracellular-facing. 5 Ig-like C2-type domains span residues 34–115 (SVVS…VEFS), 106–199 (PSMH…NTVV), 207–294 (PRPV…TAFI), 296–384 (PVQR…SFVS), and 398–483 (PVLT…IRIS). 3 disulfide bridges follow: Cys55-Cys99, Cys137-Cys181, and Cys228-Cys277. An N-linked (GlcNAc...) asparagine glycan is attached at Asn324. Disulfide bonds link Cys325-Cys373 and Cys419-Cys466. N-linked (GlcNAc...) asparagine glycosylation is present at Asn436. The helical transmembrane segment at 497 to 517 (AGITVGLLIMAVGVFLFYCWF) threads the bilayer. Residues 518-596 (SRKAGGKPTS…RSRCQMAEKK (79 aa)) are Cytoplasmic-facing. Disordered regions lie at residues 522–544 (GGKPTSDDSRNPSDSEPQEPTYY) and 561–596 (EENVIYTEVRRTQPRQKHADQESESPRSRCQMAEKK). Residues 577-596 (KHADQESESPRSRCQMAEKK) show a composition bias toward basic and acidic residues.

As to quaternary structure, interacts with CR2. Interacts with CD19. In terms of processing, phosphorylated on cytoplasmic tyrosines; required for interaction with protein tyrosine phosphatases and protein tyrosine kinases. Preferentially expressed in marginal zone B cells.

It is found in the cell membrane. Functionally, plays an important role in B-cell response to antigen that acts both as a negative or positive coreceptor. Inhibits B-cell receptor (BCR) signaling in the absence of CR2 stimulation but engagement with CR2 and the BCR lead to a superior calcium response compared to CR2 and BCR costimulation. May be involved in B-cell development and differentiation in peripheral lymphoid organs and may be useful markers of B-cell stages. May have an immunoregulatory role in marginal zone B-cells. May play a role in fertilization. In Mus musculus (Mouse), this protein is Fc receptor-like protein 5 (Fcrl5).